We begin with the raw amino-acid sequence, 240 residues long: Serine protease SplB (240 aa).

A signal peptide spans 1-36 (MNKNVVIKSLAALTILTSVTGIGITLVEEVQQTAKA). Catalysis depends on charge relay system residues His-75, Asp-113, and Ser-193.

This sequence belongs to the peptidase S1B family.

It localises to the secreted. In terms of biological role, serine protease that cleaves specifically after the sequence Trp-Glu-Leu-Gln. This is Serine protease SplB (splB) from Staphylococcus aureus (strain MW2).